The chain runs to 457 residues: Bifunctional protein GlmU (457 aa).

The pyrophosphorylase stretch occupies residues 1–228 (MEGLVTLILA…SEEITGVNSR (228 aa)). UDP-N-acetyl-alpha-D-glucosamine contacts are provided by residues 9–12 (LAAG), Lys-23, Gln-73, and 78–79 (GT). Mg(2+) is bound at residue Asp-102. Gly-139, Glu-154, Asn-169, and Asn-226 together coordinate UDP-N-acetyl-alpha-D-glucosamine. Asn-226 contacts Mg(2+). The interval 229-249 (VQLFEAEKIMRKRINYRHMEN) is linker. Positions 250-457 (GVTIVDPDTT…VQERIKKGRL (208 aa)) are N-acetyltransferase. Residues Arg-331 and Lys-349 each coordinate UDP-N-acetyl-alpha-D-glucosamine. His-361 serves as the catalytic Proton acceptor. The UDP-N-acetyl-alpha-D-glucosamine site is built by Tyr-364 and Asn-375. Residues 384-385 (NY), Ala-421, and Arg-438 each bind acetyl-CoA.

The protein in the N-terminal section; belongs to the N-acetylglucosamine-1-phosphate uridyltransferase family. In the C-terminal section; belongs to the transferase hexapeptide repeat family. In terms of assembly, homotrimer. Requires Mg(2+) as cofactor.

It is found in the cytoplasm. The enzyme catalyses alpha-D-glucosamine 1-phosphate + acetyl-CoA = N-acetyl-alpha-D-glucosamine 1-phosphate + CoA + H(+). The catalysed reaction is N-acetyl-alpha-D-glucosamine 1-phosphate + UTP + H(+) = UDP-N-acetyl-alpha-D-glucosamine + diphosphate. The protein operates within nucleotide-sugar biosynthesis; UDP-N-acetyl-alpha-D-glucosamine biosynthesis; N-acetyl-alpha-D-glucosamine 1-phosphate from alpha-D-glucosamine 6-phosphate (route II): step 2/2. It participates in nucleotide-sugar biosynthesis; UDP-N-acetyl-alpha-D-glucosamine biosynthesis; UDP-N-acetyl-alpha-D-glucosamine from N-acetyl-alpha-D-glucosamine 1-phosphate: step 1/1. It functions in the pathway bacterial outer membrane biogenesis; LPS lipid A biosynthesis. In terms of biological role, catalyzes the last two sequential reactions in the de novo biosynthetic pathway for UDP-N-acetylglucosamine (UDP-GlcNAc). The C-terminal domain catalyzes the transfer of acetyl group from acetyl coenzyme A to glucosamine-1-phosphate (GlcN-1-P) to produce N-acetylglucosamine-1-phosphate (GlcNAc-1-P), which is converted into UDP-GlcNAc by the transfer of uridine 5-monophosphate (from uridine 5-triphosphate), a reaction catalyzed by the N-terminal domain. This is Bifunctional protein GlmU from Thermoanaerobacter pseudethanolicus (strain ATCC 33223 / 39E) (Clostridium thermohydrosulfuricum).